The primary structure comprises 499 residues: Dual specificity protein kinase CLK2 (499 aa).

Residues 1–67 form a disordered region; sequence MPHPRRYHSS…SYDDRSSDRR (67 aa). Positions 8 to 21 are enriched in basic and acidic residues; sequence HSSERGSRGSYREH. The segment covering 22–33 has biased composition (basic residues); it reads YRSRKHKRRRSR. A Phosphoserine; by PKB/AKT1 modification is found at serine 34. Residues 47-67 show a composition bias toward basic and acidic residues; it reads REDSYHVRSRSSYDDRSSDRR. Phosphoserine is present on serine 98. Tyrosine 99 bears the Phosphotyrosine; by autocatalysis mark. Residues 101-143 are disordered; that stretch reads YQRENSSYRSQRSSRRKHRRRRRRSRTFSRSSSQHSSRRAKSV. A compositionally biased stretch (basic residues) spans 112–127; sequence RSSRRKHRRRRRRSRT. Threonine 127 carries the post-translational modification Phosphothreonine; by PKB/AKT1. The residue at position 142 (serine 142) is a Phosphoserine; by autocatalysis. Tyrosine 153 is subject to Phosphotyrosine. Residues 163-479 enclose the Protein kinase domain; it reads YEIVSTLGEG…LGEALQHPFF (317 aa). Residues 169–177 and lysine 193 contribute to the ATP site; that span reads LGEGTFGRV. The active-site Proton acceptor is the aspartate 290. Phosphothreonine; by PKB/AKT2 is present on threonine 344.

It belongs to the protein kinase superfamily. CMGC Ser/Thr protein kinase family. Lammer subfamily. As to quaternary structure, interacts with RBMX. Interacts with AKT1 and UBL5. In terms of processing, autophosphorylates on all three types of residues. Phosphorylation on Ser-34 and Thr-127 by AKT1 is induced by ionizing radiation or insulin. Phosphorylation plays a critical role in cell proliferation following low dose radiation and prevents cell death following high dose radiation. Phosphorylation at Thr-344 by PKB/AKT2 induces its kinase activity which is required for its stability. The phosphorylation status at Ser-142 influences its subnuclear localization; inhibition of phosphorylation at Ser-142 results in accumulation in the nuclear speckle. Endothelial cells. Expressed in androgen-dependent prostate cancer cells.

The protein resides in the nucleus. It localises to the nucleus speckle. The catalysed reaction is L-seryl-[protein] + ATP = O-phospho-L-seryl-[protein] + ADP + H(+). The enzyme catalyses L-threonyl-[protein] + ATP = O-phospho-L-threonyl-[protein] + ADP + H(+). It carries out the reaction L-tyrosyl-[protein] + ATP = O-phospho-L-tyrosyl-[protein] + ADP + H(+). With respect to regulation, 5,6-dichloro-1-b-D-ribofuranosylbenzimidazole (DRB) inhibits autophosphorylation. TG003 inhibits its kinase activity and affects the regulation of alternative splicing mediated by phosphorylation of SR proteins. Its function is as follows. Dual specificity kinase acting on both serine/threonine and tyrosine-containing substrates. Phosphorylates serine- and arginine-rich (SR) proteins of the spliceosomal complex. May be a constituent of a network of regulatory mechanisms that enable SR proteins to control RNA splicing and can cause redistribution of SR proteins from speckles to a diffuse nucleoplasmic distribution. Acts as a suppressor of hepatic gluconeogenesis and glucose output by repressing PPARGC1A transcriptional activity on gluconeogenic genes via its phosphorylation. Phosphorylates PPP2R5B thereby stimulating the assembly of PP2A phosphatase with the PPP2R5B-AKT1 complex leading to dephosphorylation of AKT1. Phosphorylates: PTPN1, SRSF1 and SRSF3. Regulates the alternative splicing of tissue factor (F3) pre-mRNA in endothelial cells. Phosphorylates PAGE4 at several serine and threonine residues and this phosphorylation attenuates the ability of PAGE4 to potentiate the transcriptional activator activity of JUN. In Homo sapiens (Human), this protein is Dual specificity protein kinase CLK2 (CLK2).